Reading from the N-terminus, the 37-residue chain is Large ribosomal subunit protein bL36 (37 aa).

Belongs to the bacterial ribosomal protein bL36 family.

This Treponema denticola (strain ATCC 35405 / DSM 14222 / CIP 103919 / JCM 8153 / KCTC 15104) protein is Large ribosomal subunit protein bL36.